The following is a 380-amino-acid chain: Phosphate acyltransferase (380 aa).

The interval 1–23 (MPSPPPTPETATASDRTATPAPG) is disordered.

The protein belongs to the PlsX family. In terms of assembly, homodimer. Probably interacts with PlsY.

It is found in the cytoplasm. The catalysed reaction is a fatty acyl-[ACP] + phosphate = an acyl phosphate + holo-[ACP]. Its pathway is lipid metabolism; phospholipid metabolism. In terms of biological role, catalyzes the reversible formation of acyl-phosphate (acyl-PO(4)) from acyl-[acyl-carrier-protein] (acyl-ACP). This enzyme utilizes acyl-ACP as fatty acyl donor, but not acyl-CoA. The polypeptide is Phosphate acyltransferase (Acidiphilium cryptum (strain JF-5)).